A 968-amino-acid polypeptide reads, in one-letter code: MPFSLGQRWISDTESELGLGTVIGLEGRMVTLMFPATDENRMFARDDAPLTRVIYNPGDIIESHEGWSLKVSEIEEKNQLVIYHGIHTETGEEVSLRETLLNHNIRFNKPQDRLFAGQIDRLDRFGVRYQSQLLRHKLATSDLLGLQGPRVGLIPHQQWIAHEVGQRFAPRVLLADEVGLGKTIEAGLIIHQQLLTGRAERILIIVPDTLRHQWLVEMLRRFNLRFSVFDEDRCVEAYADHDNPFYTEQLVICSLELLRKKKRLDQALDADWDLMVVDEAHHLEWTEEEPSRAYRVVEALSEVVPGVLLLTATPDQLGHQSHFARLRLLDPDRFYDYQAFLKEEESYKEVASAADALASGKRLPDEAVASLTELLNEKDITPALRLIEDESVDNEQRDQARSELLQELLDRHGTGRVLYRNSRASVKGFPTRIFNAHPQTMPAQYKTAARVSDMMGGQTDLTAKVKQALSPEKLYQAFESDSASWWKFDPRVDWLIDFLKNHRSKKVLIIASQAETALSLEEALRTREGIQATVFHEGMSIIERDKAGAYFAQESGGAQALICSEIGSEGRNFQFASHLVLFDLPLNPDLLEQRIGRLDRIGQANDVEIHLPYLANTAQENLMNWYHKGLNAFEQTCPTGHILFNEFSEELLTQLVYRDEDKFTQLLNHTQSRYKALKKAMEQGRDKLLEINSHGGDKAQKLVENLAARDQDTQLIGSVIRLWDIIGVEQEDSGENAIVLHPSEHMMFPTYPGLPEDGITVTFDREMALSRDDIALITQEHPLVQTGLDLITSSETGTTSVAVLKNKALPAGTIFLELIYMADASAPRSSQLYRYMPPTPVRVLLDKNGNNLSQNVSYESFDKQLSAVNRHIASKLVNASQTLLHPLFAKGEEFAQAAMKQLTEEASNKMTQQLTAELERLEALKAVNPNIRDEELEHLRNQMVELGNYLDACQLQLDAVRLVLVSHA.

Positions 163-332 (EVGQRFAPRV…FARLRLLDPD (170 aa)) constitute a Helicase ATP-binding domain. ATP is bound at residue 176 to 183 (DEVGLGKT). The DEAH box motif lies at 278–281 (DEAH). One can recognise a Helicase C-terminal domain in the interval 491–645 (RVDWLIDFLK…TCPTGHILFN (155 aa)).

This sequence belongs to the SNF2/RAD54 helicase family. RapA subfamily. As to quaternary structure, interacts with the RNAP. Has a higher affinity for the core RNAP than for the holoenzyme. Its ATPase activity is stimulated by binding to RNAP.

Its function is as follows. Transcription regulator that activates transcription by stimulating RNA polymerase (RNAP) recycling in case of stress conditions such as supercoiled DNA or high salt concentrations. Probably acts by releasing the RNAP, when it is trapped or immobilized on tightly supercoiled DNA. Does not activate transcription on linear DNA. Probably not involved in DNA repair. In Shewanella loihica (strain ATCC BAA-1088 / PV-4), this protein is RNA polymerase-associated protein RapA.